Here is a 331-residue protein sequence, read N- to C-terminus: L-lactate dehydrogenase A chain (331 aa).

NAD(+)-binding positions include 29–57 (GMVGMASAISILIKDLGDELAMVDVMEDK) and R98. R105, N137, and R168 together coordinate substrate. Residue N137 coordinates NAD(+). H192 functions as the Proton acceptor in the catalytic mechanism. T247 provides a ligand contact to substrate.

Belongs to the LDH/MDH superfamily. LDH family. Homotetramer.

The protein localises to the cytoplasm. The enzyme catalyses (S)-lactate + NAD(+) = pyruvate + NADH + H(+). The protein operates within fermentation; pyruvate fermentation to lactate; (S)-lactate from pyruvate: step 1/1. In terms of biological role, interconverts simultaneously and stereospecifically pyruvate and lactate with concomitant interconversion of NADH and NAD(+). In Harpagifer antarcticus (Antarctic spiny plunderfish), this protein is L-lactate dehydrogenase A chain (ldha).